We begin with the raw amino-acid sequence, 654 residues long: Coiled-coil domain-containing protein 81 (654 aa).

Residues 196 to 270 (SRESYRKRPN…RERQSISPAK (75 aa)) form a disordered region. Ser206 is subject to Phosphoserine. Composition is skewed to basic and acidic residues over residues 212–222 (RIEHKETENKT) and 232–251 (GENR…EGGA). Phosphoserine is present on residues Ser273, Ser275, Ser296, and Ser419. Positions 293–302 (ENLSSPGCQR) are enriched in polar residues. The interval 293–318 (ENLSSPGCQRNDNERPRTSPAPACQD) is disordered. Residues 431 to 562 (SQSLLKQMES…QRRDLQMLQR (132 aa)) are a coiled coil.

Its subcellular location is the cytoplasm. It is found in the cytoskeleton. The protein localises to the microtubule organizing center. It localises to the centrosome. The sequence is that of Coiled-coil domain-containing protein 81 (Ccdc81) from Mus musculus (Mouse).